Consider the following 802-residue polypeptide: Outer membrane usher protein PefC (802 aa).

Residues 1–24 (MSFHHRVFKLSALSLALFSHLSFA) form the signal peptide. A disulfide bridge links Cys-782 with Cys-801.

It belongs to the fimbrial export usher family.

It localises to the cell outer membrane. Involved in the export and assembly of FimA fimbrial subunits across the outer membrane. The protein is Outer membrane usher protein PefC (pefC) of Salmonella typhimurium (strain LT2 / SGSC1412 / ATCC 700720).